Reading from the N-terminus, the 569-residue chain is Urease subunit alpha (569 aa).

In terms of domain architecture, Urease spans 131 to 569 (GSIDTHIHFI…VPMAQRYFLL (439 aa)). Ni(2+) is bound by residues His136, His138, and Lys219. Lys219 carries the post-translational modification N6-carboxylysine. His221 is a substrate binding site. Residues His248 and His274 each coordinate Ni(2+). His322 (proton donor) is an active-site residue. Asp362 contacts Ni(2+).

It belongs to the metallo-dependent hydrolases superfamily. Urease alpha subunit family. As to quaternary structure, heterotrimer of UreA (gamma), UreB (beta) and UreC (alpha) subunits. Three heterotrimers associate to form the active enzyme. Ni cation serves as cofactor. In terms of processing, carboxylation allows a single lysine to coordinate two nickel ions.

The protein localises to the cytoplasm. The enzyme catalyses urea + 2 H2O + H(+) = hydrogencarbonate + 2 NH4(+). Its pathway is nitrogen metabolism; urea degradation; CO(2) and NH(3) from urea (urease route): step 1/1. In Prochlorococcus marinus (strain MIT 9215), this protein is Urease subunit alpha.